Consider the following 525-residue polypeptide: Patatin-like protein 8 (525 aa).

A disordered region spans residues 1–50; the sequence is MNRRYEKPPPLSVSSKGKKKHFVNHTAPNTPGNYERTQTSPTLSTARSHE. The segment covering 26–46 has biased composition (polar residues); sequence TAPNTPGNYERTQTSPTLSTA. In terms of domain architecture, PNPLA spans 124-338; the sequence is LSIDGGGMRG…AMSNPTAAAI (215 aa). Residues 128–133 carry the GXGXXG motif; sequence GGGMRG. The active-site Nucleophile is the Ser168.

The protein belongs to the patatin family. As to expression, specifically expressed in roots.

Functionally, possesses non-specific lipolytic acyl hydrolase (LAH) activity. Hydrolyzes phospholipids as well as galactolipids. May play a role in disease resistance. This Arabidopsis thaliana (Mouse-ear cress) protein is Patatin-like protein 8 (PLP8).